The sequence spans 847 residues: MMATEKISPGMQQYLDIKAQYPDAFLLFRMGDFYELFYEDAVEAAQILELSLTSRNKNAENPIPMAGVPYHAAQQYIDTLVELGHKVAIAEQMEDPKQAVGVVKREVVQVITPGTVTDSSKMGADSNYLVAIDRQGVQFALSYMDVSTGQFFVTSLDDFTSLCGEIRNLRARELVIGYALSEEEEQVFSNQMNLLLSFEDEVTEDVQLIDNSLTDLEKAAAGKLLSYLHRTQMRDLSHLQKVVHYEIKDYLQMDYATKSSLDLLENGRTGKKHGSLYWLLDETKTAMGMRLLRTWIDRPLIDLKRIENRQAVVQVFLDYFFERSDLVEALKGVYDIERLASRVSFGKTMPKDLLQLSQTLGNIPAIKNILQQINEPALGNLVAGLDPIPELHALISSAIDPEAQGTITDGNIIRTGFDETLDQYRLVMREGAGWIAEIEAKEREASGINNLKIDYNKKDGYYFHVTNSNLGNVPDHFFRKATLKNSERYGTEELAKIEGQMLEARDKSANLEYEIFMRIRQEVEKYIGRLQKLARTIATIDVLQAFAVVAEQQHLVCPRFTDQRELTIDRGRHAVVEKVMGKQTYIPNSIHLNTDTHMQLITGPNMSGKSTYMRQLAVIVIMAQMGSYVPADQAELPIFDAIFTRIGAADDLVSGQSTFMVEMMEANKAVRLATDRSLILFDELGRGTATYDGMALAQSIIEYIHDKIGAKTLFATHYHELTDLSQTLEHLENVHVSTLEKDGQVTFLHKIAQGPADKSYGIHVAKIAGMPEELLQRADRILQTLENQAPTAPTHPAPSVVEEPSGQLDLFADTPSHPVLDELEKLDIYNMTPMEVMMAVAELKKKI.

603–610 (GPNMSGKS) is a binding site for ATP.

It belongs to the DNA mismatch repair MutS family.

Functionally, this protein is involved in the repair of mismatches in DNA. It is possible that it carries out the mismatch recognition step. This protein has a weak ATPase activity. The chain is DNA mismatch repair protein MutS from Streptococcus suis (strain 98HAH33).